The primary structure comprises 187 residues: Mitochondrial intermembrane space import and assembly protein 40 (187 aa).

Residues 1–24 (MFRPASRALLRAPAVARGPASRRL) constitute a mitochondrion transit peptide. At 25-43 (ISTAPAESKPRSWKNTAVR) the chain is on the mitochondrial matrix side. A helical; Signal-anchor for type II membrane protein transmembrane segment spans residues 44–61 (LGLAAGAIYYYNTSNVFA). Residues 62-187 (ENPSFSLNNQ…MDCIEKFKCV (126 aa)) are Mitochondrial intermembrane-facing. Residues 73-115 (KKNSAEEPLPTLDSIKPRIREERESAAPKPNAEQAPAQELPFG) are disordered. Over residues 87 to 98 (IKPRIREERESA) the composition is skewed to basic and acidic residues. Disulfide bonds link Cys-146/Cys-148 and Cys-167/Cys-180. The region spanning 154–187 (HGPCGEEFKAAFSCFVYSEEEPKGMDCIEKFKCV) is the CHCH domain. Residues 157–167 (CGEEFKAAFSC) carry the Cx9C motif motif.

As to quaternary structure, monomer. The cofactor is Cu(2+). Zn(2+) serves as cofactor.

The protein resides in the mitochondrion inner membrane. Functionally, required for the import and folding of small cysteine-containing proteins (small Tim) in the mitochondrial intermembrane space (IMS). Forms a redox cycle with ERV1 that involves a disulfide relay system. Precursor proteins to be imported into the IMS are translocated in their reduced form into the mitochondria. The oxidized form of MIA40 forms a transient intermolecular disulfide bridge with the reduced precursor protein, resulting in oxidation of the precursor protein that now contains an intramolecular disulfide bond and is able to undergo folding in the IMS. The polypeptide is Mitochondrial intermembrane space import and assembly protein 40 (mia40) (Aspergillus oryzae (strain ATCC 42149 / RIB 40) (Yellow koji mold)).